The chain runs to 180 residues: Flavin prenyltransferase UbiX (180 aa).

Residues 9 to 11 (GAS), Ser33, 84 to 87 (SITT), and Arg119 each bind FMN. The dimethylallyl phosphate site is built by Tyr149 and Arg165.

Belongs to the UbiX/PAD1 family.

It catalyses the reaction dimethylallyl phosphate + FMNH2 = prenylated FMNH2 + phosphate. In terms of biological role, flavin prenyltransferase that catalyzes the synthesis of the prenylated FMN cofactor (prenyl-FMN) for 4-hydroxy-3-polyprenylbenzoic acid decarboxylase UbiD. The prenyltransferase is metal-independent and links a dimethylallyl moiety from dimethylallyl monophosphate (DMAP) to the flavin N5 and C6 atoms of FMN. The sequence is that of Flavin prenyltransferase UbiX from Thermoplasma acidophilum (strain ATCC 25905 / DSM 1728 / JCM 9062 / NBRC 15155 / AMRC-C165).